Consider the following 584-residue polypeptide: Putative adenine deaminase BA_3032/GBAA_3032/BAS2818 (584 aa).

This sequence belongs to the metallo-dependent hydrolases superfamily. Adenine deaminase family.

The enzyme catalyses adenine + H2O + H(+) = hypoxanthine + NH4(+). This chain is Putative adenine deaminase BA_3032/GBAA_3032/BAS2818, found in Bacillus anthracis.